The chain runs to 377 residues: Spermidine/putrescine import ATP-binding protein PotA (377 aa).

The ABC transporter domain occupies 22–252; sequence VRLQNVTKRF…PANRFVADFI (231 aa). Residue 54 to 61 participates in ATP binding; sequence GPSGCGKT.

Belongs to the ABC transporter superfamily. Spermidine/putrescine importer (TC 3.A.1.11.1) family. The complex is composed of two ATP-binding proteins (PotA), two transmembrane proteins (PotB and PotC) and a solute-binding protein (PotD).

The protein localises to the cell membrane. It carries out the reaction ATP + H2O + polyamine-[polyamine-binding protein]Side 1 = ADP + phosphate + polyamineSide 2 + [polyamine-binding protein]Side 1.. Part of the ABC transporter complex PotABCD involved in spermidine/putrescine import. Responsible for energy coupling to the transport system. The sequence is that of Spermidine/putrescine import ATP-binding protein PotA from Rubrobacter xylanophilus (strain DSM 9941 / JCM 11954 / NBRC 16129 / PRD-1).